Consider the following 405-residue polypeptide: Phosphoglycerate kinase (405 aa).

Substrate contacts are provided by residues 24-26 (DFN), arginine 40, 63-66 (HLGR), arginine 122, and arginine 162. ATP is bound by residues lysine 212, glutamate 331, and 361-364 (GGDS).

This sequence belongs to the phosphoglycerate kinase family. Monomer.

The protein localises to the cytoplasm. It catalyses the reaction (2R)-3-phosphoglycerate + ATP = (2R)-3-phospho-glyceroyl phosphate + ADP. It functions in the pathway carbohydrate degradation; glycolysis; pyruvate from D-glyceraldehyde 3-phosphate: step 2/5. This is Phosphoglycerate kinase from Corynebacterium glutamicum (strain R).